Here is a 335-residue protein sequence, read N- to C-terminus: MKTILAVETSCDETAVAIVNSDKQVLAHEILSQAEHKKRGGVIPEIASRAHMEHLSGLIKSAVEKSNLNFCDLNAIAATSGPGLIGGLIVGTMMAKAIAHVAQKPFIAVNHLEAHALVIRLLHEVKFPFLVLLISGGHCQFLIAQDVGKYIKLGETLDDSLGEAFDKVAKMLGLSYPGGPLIEKLAKKGNGTRFKLPRAMIKRSGCNFSFSGIKTAVKNLVQELKMSEQDVCDVCASFQECISDILLDRVSNAIIMAESLNIKINDFVITGGVAANNFLREKLKQHINLNIFFPPNDLCTDNAIMVGWTGIERLQKNYIDPLNFAPRPKWELESY.

Residues His111 and His115 each contribute to the Fe cation site. Substrate is bound by residues 133–137, Asp166, Gly179, and Asn276; that span reads LISGG. Position 301 (Asp301) interacts with Fe cation.

Belongs to the KAE1 / TsaD family. Fe(2+) serves as cofactor.

It is found in the cytoplasm. It carries out the reaction L-threonylcarbamoyladenylate + adenosine(37) in tRNA = N(6)-L-threonylcarbamoyladenosine(37) in tRNA + AMP + H(+). Its function is as follows. Required for the formation of a threonylcarbamoyl group on adenosine at position 37 (t(6)A37) in tRNAs that read codons beginning with adenine. Is involved in the transfer of the threonylcarbamoyl moiety of threonylcarbamoyl-AMP (TC-AMP) to the N6 group of A37, together with TsaE and TsaB. TsaD likely plays a direct catalytic role in this reaction. The chain is tRNA N6-adenosine threonylcarbamoyltransferase from Wolbachia pipientis wMel.